We begin with the raw amino-acid sequence, 747 residues long: uncharacterized protein (747 aa).

A helical membrane pass occupies residues 7–27; sequence FFLKVISVIAPIVIIPTILAN.

The protein localises to the membrane. This is an uncharacterized protein from Ureaplasma parvum serovar 3 (strain ATCC 700970).